A 644-amino-acid polypeptide reads, in one-letter code: Protein lin-9 (644 aa).

The segment at 1–77 (MSSAVRSPRK…GRDSPSVNSL (77 aa)) is disordered. Over residues 50 to 62 (SIKRTGSPKKSPA) the composition is skewed to basic residues.

It belongs to the lin-9 family. In terms of assembly, component of the DRM complex, at least composed of lin-9, lin-35, lin-37, lin-52, lin-53, lin-54- dpl-1 and efl-1. Interacts with zft-11; the interaction is required to suppress the activation of non-neuronal genes in neurons.

The protein localises to the nucleus. Functionally, synthetic multivulva class B (synMuvB) protein. SynMuvB proteins are required to repress the induction of vulval development by Ras signaling and probably act by forming the multiprotein DRM complex that represses transcription. Required for the development of sheath cells in the hermaphrodite gonad and for the development of the male spicule, rays and gonad. In association with the zinc finger protein ztf-11, negatively regulates the expression of non-neuronal genes during neurogenesis. In Caenorhabditis elegans, this protein is Protein lin-9.